A 122-amino-acid polypeptide reads, in one-letter code: Putative iron-sulfur cluster insertion protein ErpA (122 aa).

Residues cysteine 50, cysteine 114, and cysteine 116 each coordinate iron-sulfur cluster.

It belongs to the HesB/IscA family. Homodimer. It depends on iron-sulfur cluster as a cofactor.

In terms of biological role, required for insertion of 4Fe-4S clusters. This Burkholderia mallei (strain NCTC 10247) protein is Putative iron-sulfur cluster insertion protein ErpA.